We begin with the raw amino-acid sequence, 274 residues long: Diaminopimelate epimerase (274 aa).

Residues N11, Q44, and N64 each coordinate substrate. C73 serves as the catalytic Proton donor. Residues 74 to 75, N157, N190, and 208 to 209 contribute to the substrate site; these read GN and ER. C217 (proton acceptor) is an active-site residue. 218–219 contacts substrate; the sequence is GS.

Belongs to the diaminopimelate epimerase family. In terms of assembly, homodimer (Potential). Previously DapF has been proposed to be a monomer, however it seems that it adopts a dimeric structure.

It localises to the cytoplasm. It carries out the reaction (2S,6S)-2,6-diaminopimelate = meso-2,6-diaminopimelate. Its pathway is amino-acid biosynthesis; L-lysine biosynthesis via DAP pathway; DL-2,6-diaminopimelate from LL-2,6-diaminopimelate: step 1/1. Its activity is regulated as follows. Inhibited by LL-aziridino (LL-AziDAP), DL-aziridino (DL-AziDAP). Also inhibited by (2S,3R,6S)-2,6-diamino-3-fluoropimelate (L,L-3-fluoro-DAP) and (2R,3S,6S)-2,6-diamino-3-fluoropimelate (D,L-3-fluoro-DAP). Functionally, catalyzes the stereoinversion of LL-2,6-diaminopimelate (L,L-DAP) to meso-diaminopimelate (meso-DAP), a precursor of L-lysine and an essential component of the bacterial peptidoglycan. Only accepts DAP isomers with the L configuration. The protein is Diaminopimelate epimerase of Haemophilus influenzae (strain ATCC 51907 / DSM 11121 / KW20 / Rd).